Reading from the N-terminus, the 61-residue chain is Small ribosomal subunit protein uS14 (61 aa).

Residues cysteine 24, cysteine 27, cysteine 40, and cysteine 43 each coordinate Zn(2+).

This sequence belongs to the universal ribosomal protein uS14 family. Zinc-binding uS14 subfamily. In terms of assembly, part of the 30S ribosomal subunit. Contacts proteins S3 and S10. The cofactor is Zn(2+).

Its function is as follows. Binds 16S rRNA, required for the assembly of 30S particles and may also be responsible for determining the conformation of the 16S rRNA at the A site. The chain is Small ribosomal subunit protein uS14 from Finegoldia magna (strain ATCC 29328 / DSM 20472 / WAL 2508) (Peptostreptococcus magnus).